A 366-amino-acid polypeptide reads, in one-letter code: MKTRSKKTKTENNQEKSKEKNKFDQLPLDLEIEIFRRLPLKSVARFLTLSKSCAATIRSPSFITSFRSPQPCTLIASAPIFNCLHPFKPRVLVDHKLSFFSSSSSSSSSTSFLSRLTCPSSPYPRHMEYYCHYVNGLISVGYGREQIVTNPSTGRFITLPSVRTKRRLVKSFFGYDPASDQYKVLCMTERLYGHQEDPSSQHQVFTLGVKKPWKMLDRTTIPDHRPWTNGVCIDGVVYYIAKTGQGMSQLSLMRYDLRDDNLNVFISLPEEIRTPSLYSDTLLNYEGKLAIAIPVTSYIFDVWVMDQDGEKHEWLKKITFNIEPWQSSFDDIRIKGTTLTGEFIFAPMNNYCDDEFYVFHYKSQQE.

The segment at 1-20 (MKTRSKKTKTENNQEKSKEK) is disordered. The span at 8-20 (TKTENNQEKSKEK) shows a compositional bias: basic and acidic residues. In terms of domain architecture, F-box spans 20-66 (KNKFDQLPLDLEIEIFRRLPLKSVARFLTLSKSCAATIRSPSFITSF).

This Arabidopsis thaliana (Mouse-ear cress) protein is Putative F-box protein At1g26515.